We begin with the raw amino-acid sequence, 93 residues long: UPF0521 protein B (93 aa).

The stretch at 2-58 (SLKEVITSLKNDFHSINKEIDSMKENNEKQEEKIFQEIKKLKLEMELLRKDNLSFKT) forms a coiled coil.

Belongs to the UPF0521 family.

The chain is UPF0521 protein B from Dictyostelium discoideum (Social amoeba).